We begin with the raw amino-acid sequence, 294 residues long: tRNA pseudouridine synthase B (294 aa).

The active-site Nucleophile is the Asp39.

The protein belongs to the pseudouridine synthase TruB family. Type 1 subfamily.

It catalyses the reaction uridine(55) in tRNA = pseudouridine(55) in tRNA. In terms of biological role, responsible for synthesis of pseudouridine from uracil-55 in the psi GC loop of transfer RNAs. The polypeptide is tRNA pseudouridine synthase B (Streptococcus pyogenes serotype M6 (strain ATCC BAA-946 / MGAS10394)).